A 439-amino-acid polypeptide reads, in one-letter code: MTKFPRWLAMLVGLLFPLSALTQQQGLTIDIVGGNTAATPIAVLPMPYHDSVGAPATDVSSVVAADLNRSGQFRTLPLGQIIERPTHGSEIRFPTWQALKQDYIVVGRVLDARQGTYRVEYELFDVRNGKRMLGLAMTARASAMRDVAHQMADAIYEKITGLRGAFFTRIAYVTASGSHGAMRYALMVADSDGYNPQTIVRSAEPLLSPDWSPDGKKLAYVSFEKGGSSIYIQDIATGSRELVSSFRGINAAPSFAPDGHRIALSLSRSGNPEIYVMDLVSKQLIQLTNSFGIDTEPAWSSDGKFIYFTSDRGGRPQIYKVASVGGTATRVTFQGNYNATTSVSYDDKKIVVAQGSGNVYRIAMMDQSSGSTVWNTLSTGSLDESPSFAPNASMVLYAAREGGRGVLYAVSADARVRQRLVSVDSDVREPAWGPYRSVH.

The signal sequence occupies residues 1-22 (MTKFPRWLAMLVGLLFPLSALT).

It belongs to the TolB family. As to quaternary structure, the Tol-Pal system is composed of five core proteins: the inner membrane proteins TolA, TolQ and TolR, the periplasmic protein TolB and the outer membrane protein Pal. They form a network linking the inner and outer membranes and the peptidoglycan layer.

The protein resides in the periplasm. Part of the Tol-Pal system, which plays a role in outer membrane invagination during cell division and is important for maintaining outer membrane integrity. In Xylella fastidiosa (strain 9a5c), this protein is Tol-Pal system protein TolB.